Reading from the N-terminus, the 737-residue chain is LIMR family protein R05D3.2 (737 aa).

Over residues 280-293 (ADIEEENSEQSEDV) the composition is skewed to acidic residues. Positions 280 to 416 (ADIEEENSEQ…PKKPKNPNFD (137 aa)) are disordered. Over residues 303–318 (ETIHQVDRSDTPHLED) the composition is skewed to basic and acidic residues.

It belongs to the LIMR family.

The sequence is that of LIMR family protein R05D3.2 from Caenorhabditis elegans.